A 207-amino-acid chain; its full sequence is Neuroendocrine protein 7B2 (207 aa).

An N-terminal signal peptide occupies residues M1–A22. A disulfide bridge links C116 with C125. S136 and S200 each carry phosphoserine. The segment at K168 to E207 is disordered.

It belongs to the 7B2 family. As to quaternary structure, interacts with PCSK2/PC2 early in the secretory pathway. Dissociation occurs at later stages. In terms of processing, proteolytically cleaved in the Golgi by a furin-like convertase to generate bioactive peptides. Sulfated on tyrosine residues.

It localises to the secreted. Acts as a molecular chaperone for PCSK2/PC2, preventing its premature activation in the regulated secretory pathway. Binds to inactive PCSK2 in the endoplasmic reticulum and facilitates its transport from there to later compartments of the secretory pathway where it is proteolytically matured and activated. Also required for cleavage of PCSK2 but does not appear to be involved in its folding. Plays a role in regulating pituitary hormone secretion. The C-terminal peptide inhibits PCSK2 in vitro. The protein is Neuroendocrine protein 7B2 (SCG5) of Sus scrofa (Pig).